The chain runs to 418 residues: MNNPQTGQSTGLLGNRWFYLVLAVLLMCMISGVQYSWTLYANPVKDNLGVSLAAVQTAFTLSQVIQAGSQPGGGYFVDKFGPRIPLMFGGAMVLAGWTFMGMVDSVPALYALYTLAGAGVGIVYGIAMNTANRWFPDKRGLASGFTAAGYGLGVLPFLPLISSVLKVEGVGAAFMYTGLIMGILIILIAFVIRFPGQQGAKKQIVVTDKDFNSGEMLRTPQFWVLWTAFFSVNFGGLLLVANSVPYGRSLGLAAGVLTIGVSIQNLFNGGCRPFWGFVSDKIGRYKTMSVVFGINAVVLALFPTIAALGDVAFIAMLAIAFFTWGGSYALFPSTNSDIFGTAYSARNYGFFWAAKATASIFGGGLGAAIATNFGWNTAFLITAITSFIAFALATFVIPRMGRPVKKMVKLSPEEKAVH.

Transmembrane regions (helical) follow at residues 17-37 (WFYL…QYSW), 48-68 (LGVS…IQAG), 84-104 (IPLM…GMVD), 108-128 (ALYA…GIAM), 141-161 (LASG…LPLI), 172-192 (AAFM…AFVI), 222-242 (FWVL…LVAN), 250-270 (LGLA…FNGG), 288-308 (MSVV…IAAL), 311-331 (VAFI…YALF), 350-370 (FFWA…AAIA), and 378-398 (AFLI…FVIP). Position 355 (lysine 355) interacts with oxalate.

It belongs to the major facilitator superfamily. OFA (TC 2.A.1.11) family. Monomer.

Its subcellular location is the cell inner membrane. Functionally, anion transporter that carries out the exchange of divalent oxalate with monovalent formate, the product of oxalate decarboxylation, at the plasma membrane, and in doing so catalyzes the vectorial portion of a proton-motive metabolic cycle that drives ATP synthesis. The sequence is that of Oxalate:formate antiporter (oxlT) from Oxalobacter formigenes.